The sequence spans 266 residues: Non-structural maintenance of chromosomes element 1 homolog (266 aa).

An interaction with NSMCE3 region spans residues 1-102; sequence MQGSTRRMGV…SISKMATDFA (102 aa). An RING-type; atypical zinc finger spans residues 191 to 232; that stretch reads CNICHSLLIQGQSCETCGIRMHLPCVAKYFQSNAEPRCPHCN. A disordered region spans residues 246–266; it reads EKERESGVLKSNKKSLRSRQH. Ser251 carries the post-translational modification Phosphoserine. Over residues 256–266 the composition is skewed to basic residues; that stretch reads SNKKSLRSRQH.

It belongs to the NSE1 family. Component of the SMC5-SMC6 complex which consists at least of SMC5, SMC6, NSMCE2, NSMCE1, NSMCE4A or EID3 and NSMCE3. NSMCE1, NSMCE4A or EID3 and NSMCE3 probably form a subcomplex that bridges the head domains of the SMC5-SMC6 heterodimer. Interacts with NSMCE3. Interacts with MAGEF1. In terms of processing, ubiquitinated.

It is found in the nucleus. The protein resides in the chromosome. The protein localises to the telomere. The catalysed reaction is S-ubiquitinyl-[E2 ubiquitin-conjugating enzyme]-L-cysteine + [acceptor protein]-L-lysine = [E2 ubiquitin-conjugating enzyme]-L-cysteine + N(6)-ubiquitinyl-[acceptor protein]-L-lysine.. Functionally, RING-type zinc finger-containing E3 ubiquitin ligase that assembles with melanoma antigen protein (MAGE) to catalyze the direct transfer of ubiquitin from E2 ubiquitin-conjugating enzyme to a specific substrate. Within MAGE-RING ubiquitin ligase complex, MAGE stimulates and specifies ubiquitin ligase activity likely through recruitment and/or stabilization of the E2 ubiquitin-conjugating enzyme at the E3:substrate complex. Involved in maintenance of genome integrity, DNA damage response and DNA repair. NSMCE3/MAGEG1 and NSMCE1 ubiquitin ligase are components of SMC5-SMC6 complex and may positively regulate homologous recombination-mediated DNA repair. MAGEF1-NSMCE1 ubiquitin ligase promotes proteasomal degradation of MMS19, a key component of the cytosolic iron-sulfur protein assembly (CIA) machinery. Down-regulation of MMS19 impairs the activity of several DNA repair and metabolism enzymes such as ERCC2/XPD, FANCJ, RTEL1 and POLD1 that require iron-sulfur clusters as cofactors. The polypeptide is Non-structural maintenance of chromosomes element 1 homolog (Homo sapiens (Human)).